We begin with the raw amino-acid sequence, 125 residues long: MAQVPPSLQDLANRYNQAQAQLQSVLLRKQQYEAELREVDKAISEIEKLPQDAKIFKSVGNFLVQQSRDAALQELKDRKELLELHVKTLAKQESMLREQLEKLKEELNKELAKLRGGQEAAKGGG.

This sequence belongs to the prefoldin subunit beta family. Heterohexamer of two alpha and four beta subunits.

The protein localises to the cytoplasm. Functionally, molecular chaperone capable of stabilizing a range of proteins. Seems to fulfill an ATP-independent, HSP70-like function in archaeal de novo protein folding. The protein is Prefoldin subunit beta of Pyrobaculum calidifontis (strain DSM 21063 / JCM 11548 / VA1).